The sequence spans 65 residues: Large ribosomal subunit protein bL35 (65 aa).

This sequence belongs to the bacterial ribosomal protein bL35 family.

This chain is Large ribosomal subunit protein bL35, found in Prochlorococcus marinus (strain MIT 9301).